The following is a 293-amino-acid chain: MSEADVTARGDAALLGPAEVRALAERFGVRPTKQLGQNFVHDANTVRRIVTAAGVGRADTVLEVGPGLGSLTLALLDVVDSVVAVEIDPVLAEHLPRTVADRAPALAGRLRVVRDDALRVRAADLPASPTALVANLPYNVAVPVLLHLLAELPGLRTALVMVQAEVADRLAAEPGSRVYGVPSVKAGFFGTVRRAGAVGTQVFWPVPRVESGLVRVERYVEPPWPMDEQHRRRVFEIIDAAFAQRRKTLRAALAGWAGSPAEAERRLLAAGIDPTARGETLDTAAYVRLAAQA.

S-adenosyl-L-methionine is bound by residues N38, V40, G65, E86, D116, and N135.

It belongs to the class I-like SAM-binding methyltransferase superfamily. rRNA adenine N(6)-methyltransferase family. RsmA subfamily.

The protein resides in the cytoplasm. The catalysed reaction is adenosine(1518)/adenosine(1519) in 16S rRNA + 4 S-adenosyl-L-methionine = N(6)-dimethyladenosine(1518)/N(6)-dimethyladenosine(1519) in 16S rRNA + 4 S-adenosyl-L-homocysteine + 4 H(+). Specifically dimethylates two adjacent adenosines (A1518 and A1519) in the loop of a conserved hairpin near the 3'-end of 16S rRNA in the 30S particle. May play a critical role in biogenesis of 30S subunits. The protein is Ribosomal RNA small subunit methyltransferase A of Nocardia farcinica (strain IFM 10152).